The primary structure comprises 353 residues: MATLTSSICSKPKASVFDPHKSSFHGVPIATQARLSPVKSTPVNLAVTAAAMPYDLRSFKFEPIKESIVSREMTRRYMMDMITYADTDVVVVGAGSAGLSCAYELSKNPSVQVAIIEQSVSPGGGAWLGGQLFSSMVVRKPAHRFLDELGLEYDEQDNYVVIKHAALFTSTIMSKLLARPNVKLFNAVAAEDLIIKEGKVGGVVTNWALVSMNHDTQSCMDPNVMEAKVVVSSCGHDGPFGATGVKRLRSVGMIDSVPGMKALDMNTAEDEIVRLTREVVPGMIVTGMEVAEIDGSPRMGPTFGAMMISGQKAAHLALKSLGLPNALDGTYIGNLHPELVLAAAADAAEIAEA.

Residues 1–48 (MATLTSSICSKPKASVFDPHKSSFHGVPIATQARLSPVKSTPVNLAVT) constitute a chloroplast transit peptide. Residues Ala97, 117–118 (EQ), Gly125, and Ala190 contribute to the substrate site. A 2,3-didehydroalanine (Cys) modification is found at Cys219. Substrate contacts are provided by residues Asp221, His236, Met288, and 298-300 (RMG).

It belongs to the THI4 family. As to quaternary structure, homooctamer. Fe cation is required as a cofactor. During the catalytic reaction, a sulfide is transferred from Cys-219 to a reaction intermediate, generating a dehydroalanine residue.

The protein resides in the plastid. It is found in the chloroplast. The enzyme catalyses [ADP-thiazole synthase]-L-cysteine + glycine + NAD(+) = [ADP-thiazole synthase]-dehydroalanine + ADP-5-ethyl-4-methylthiazole-2-carboxylate + nicotinamide + 3 H2O + 2 H(+). In terms of biological role, involved in biosynthesis of the thiamine precursor thiazole. Catalyzes the conversion of NAD and glycine to adenosine diphosphate 5-(2-hydroxyethyl)-4-methylthiazole-2-carboxylic acid (ADT), an adenylated thiazole intermediate. The reaction includes an iron-dependent sulfide transfer from a conserved cysteine residue of the protein to a thiazole intermediate. The enzyme can only undergo a single turnover, which suggests it is a suicide enzyme. May have additional roles in adaptation to various stress conditions and in DNA damage tolerance. The protein is Thiamine thiazole synthase 1, chloroplastic of Vitis vinifera (Grape).